We begin with the raw amino-acid sequence, 73 residues long: Antimicrobial peptide TsAP-1 (73 aa).

An N-terminal signal peptide occupies residues 1-22 (MQIKHLITLFFLVLIVADQCSA). Lysine amide is present on Lys-39. Residues 45–73 (EISAQIEQYKDLQKREAELEELLDRLPMY) constitute a propeptide that is removed on maturation.

Expressed by the venom gland.

Its subcellular location is the secreted. Has a low antimicrobial activity against S.aureus, E.coli, and C.albicans (MICs 120-160 uM). Has a low hemolytic activity (4% at 160 uM). Also inhibits the growth of two cancer cell lines on a total of five (the squamous carcinoma cell line H157 (IC(50)=55.9 uM) and the lung adenocarcinoma cell line H838 (IC(50)=52.5 uM)). The polypeptide is Antimicrobial peptide TsAP-1 (Tityus serrulatus (Brazilian scorpion)).